A 165-amino-acid polypeptide reads, in one-letter code: Hemolysin, heat labile (165 aa).

A disulfide bond links C151 and C161.

It belongs to the TDH hemolysin family. As to quaternary structure, homodimer.

Bacterial hemolysins are exotoxins that attack blood cell membranes and cause cell rupture by mechanisms not clearly defined. The polypeptide is Hemolysin, heat labile (Grimontia hollisae (Vibrio hollisae)).